Consider the following 359-residue polypeptide: Phospho-N-acetylmuramoyl-pentapeptide-transferase (359 aa).

The next 10 helical transmembrane spans lie at 23–43 (VAFF…IKWA), 68–88 (MGGI…GNLF), 92–112 (VLLG…DDYM), 126–146 (MKFF…LYIG), 165–185 (AFKI…VFLA), 198–218 (GLAT…VYVA), 235–255 (SGEL…FLWY), 262–282 (VFMG…MAIV), 287–307 (ILLL…ILQV), and 336–356 (KIIV…LLSL).

This sequence belongs to the glycosyltransferase 4 family. MraY subfamily. Mg(2+) serves as cofactor.

The protein resides in the cell inner membrane. The catalysed reaction is UDP-N-acetyl-alpha-D-muramoyl-L-alanyl-gamma-D-glutamyl-meso-2,6-diaminopimeloyl-D-alanyl-D-alanine + di-trans,octa-cis-undecaprenyl phosphate = di-trans,octa-cis-undecaprenyl diphospho-N-acetyl-alpha-D-muramoyl-L-alanyl-D-glutamyl-meso-2,6-diaminopimeloyl-D-alanyl-D-alanine + UMP. It functions in the pathway cell wall biogenesis; peptidoglycan biosynthesis. In terms of biological role, catalyzes the initial step of the lipid cycle reactions in the biosynthesis of the cell wall peptidoglycan: transfers peptidoglycan precursor phospho-MurNAc-pentapeptide from UDP-MurNAc-pentapeptide onto the lipid carrier undecaprenyl phosphate, yielding undecaprenyl-pyrophosphoryl-MurNAc-pentapeptide, known as lipid I. This chain is Phospho-N-acetylmuramoyl-pentapeptide-transferase, found in Helicobacter hepaticus (strain ATCC 51449 / 3B1).